The chain runs to 463 residues: Quinolone resistance protein NorB (463 aa).

Helical transmembrane passes span 17-37, 53-73, 86-106, 107-127, 142-162, 165-185, 201-221, 230-250, 273-293, 299-319, 334-354, 357-377, 403-423, and 435-455; these read IGIVLSVITFWLFAQSLVNVV, IAVSITALFSGMFVVGAGGLA, IILNILGSLLIIISNIPLLLI, IGRLIQGLSAACIMPATLSII, YWSIGSWGGSGVCSFFGGAVA, LGWRWIFILSIIISLIALFLI, FDIKGLVLLVIMLLSLNILIT, SLLFITLLAIAIGSFSLFIVL, TASNFLLNGVAGTLIVANTFV, YSSLQAGSLSITYLVMVLIMI, PMLIGTGVLIVGECLISLTFL, IFYVICCIIGYLFFGLGLGIY, MASALGGAFGVALSGAVYAIV, and IALWLNAAMGILSFVIILLLV.

It belongs to the major facilitator superfamily. TCR/Tet family.

It is found in the cell membrane. Its function is as follows. Multidrug efflux pump that acts independently of NorA and is one of the factors that confers resistance against diverse quinolones and chemical compounds. In Staphylococcus aureus (strain COL), this protein is Quinolone resistance protein NorB (norB).